The sequence spans 556 residues: MNKMEQMKQQLREEIVVAVKAAGLATDETIPEVILETPKEKAHGDFATNMAMQLARVAKKAPRLIAEELTAKLDRKRAAIEKIEIAGPGFINFFLDNSYLREMIPTVLRAESAYGETNVGKGKKVQVEFVSANPTGNLHLGHARGAAVGDALCNILAKAGYDVSREYYINDAGNQINNLALSLEARYFQALGMEKDMPEDGYHGEDIIQFGKDLAETHGDKFVHESSEERLAFFREYGLKRELEKIKSDLEEFRVPFDNWYSETSLYTTGKVEKTLNVLKEKGKTYEQDGALWFRSTEYGDDKDRVLVKNDGSYTYLTPDISYHEDKFLRGFEKLINIWGADHHGYIPRMKAAIQALGYEKDQLDVQIIQMVSLFQNGEKVKMSKRTGKAVTLRDLMEEVGIDATRYFFAMRSADSHLDFDMDLAVSKSNENPVYYVQYAHARVCSMLRKGKELGLSFDESTDLSPIASEKEYDLLKKIGEFPEVVAEAAQKQMPHRITNYVHELASTLHSFYNAEQVINPENDEQSKARLALMKATQVTLKNALSLVGVEAPERM.

Residues 132–142 (ANPTGNLHLGH) carry the 'HIGH' region motif.

The protein belongs to the class-I aminoacyl-tRNA synthetase family. Monomer.

It is found in the cytoplasm. The catalysed reaction is tRNA(Arg) + L-arginine + ATP = L-arginyl-tRNA(Arg) + AMP + diphosphate. The chain is Arginine--tRNA ligase 1 (argS1) from Halalkalibacterium halodurans (strain ATCC BAA-125 / DSM 18197 / FERM 7344 / JCM 9153 / C-125) (Bacillus halodurans).